A 333-amino-acid polypeptide reads, in one-letter code: Transcription termination factor MTERF6, chloroplastic/mitochondrial (333 aa).

It belongs to the mTERF family.

The protein resides in the plastid. The protein localises to the chloroplast. Its subcellular location is the mitochondrion. Functionally, transcription termination factor essential for chloroplast development. Required for maturation of 16S rRNA, 18S rRNA and 23S rRNA in the chloroplast. Binds to a specific region within the tRNA(Ile)(GAU) gene at a position adjacent to and downstream of the 16S rRNA gene. Required for the maturation of tRNA(Ile)(GAU). Binds to double-stranded DNA. The sequence is that of Transcription termination factor MTERF6, chloroplastic/mitochondrial from Arabidopsis thaliana (Mouse-ear cress).